Here is a 255-residue protein sequence, read N- to C-terminus: MTLEIEQFMCRSDNFGILARDSETGITALVDAPEEQAILEAIKRTGWTPSLLLITHHHADHVEANLALKERFGLTIIGPAKEASKIPGIDRQVNEGDVVRVGNQEARVIETPGHTAGHITFYFAKAGIAFTADTLFALGCGRLFECKPPVMYESLKKLVELPLETVIYCGHEYTESNARFALSVDPTNSALKERAKKIEALRREGRPTLPTTLGEEMATNPFLRCHDPVLRNNLGMKNAADVEVFAEIRKRKDVF.

H56, H58, D60, H61, H114, D133, and H171 together coordinate Zn(2+).

It belongs to the metallo-beta-lactamase superfamily. Glyoxalase II family. In terms of assembly, monomer. The cofactor is Zn(2+).

The enzyme catalyses an S-(2-hydroxyacyl)glutathione + H2O = a 2-hydroxy carboxylate + glutathione + H(+). It functions in the pathway secondary metabolite metabolism; methylglyoxal degradation; (R)-lactate from methylglyoxal: step 2/2. Thiolesterase that catalyzes the hydrolysis of S-D-lactoyl-glutathione to form glutathione and D-lactic acid. This Chelativorans sp. (strain BNC1) protein is Hydroxyacylglutathione hydrolase.